We begin with the raw amino-acid sequence, 140 residues long: Large ribosomal subunit protein bL17 (140 aa).

This sequence belongs to the bacterial ribosomal protein bL17 family. As to quaternary structure, part of the 50S ribosomal subunit. Contacts protein L32.

The chain is Large ribosomal subunit protein bL17 from Paracoccus denitrificans (strain Pd 1222).